We begin with the raw amino-acid sequence, 803 residues long: Mastermind-like domain-containing protein 1 (803 aa).

Disordered stretches follow at residues 22–50, 292–374, 420–452, and 486–641; these read NRQE…TGMA, LAAS…APSS, GHLI…QQSF, and QQQQ…PDQS. Residues 296-309 are compositionally biased toward polar residues; it reads KQGSATKQGSNRNW. A compositionally biased stretch (pro residues) spans 312–340; it reads LPPPGLSPPYLPVPSPHPPPPQPPPPPFS. The span at 347–362 shows a compositional bias: low complexity; the sequence is SCMSSSSLSGSAVQSS. 4 stretches are compositionally biased toward polar residues: residues 363 to 374, 441 to 452, 495 to 526, and 547 to 564; these read PNALLSSMAPSS, NLSSPGLPQQSF, HQAN…SSSP, and PSPQ…QSSL. Residues 571 to 588 are compositionally biased toward low complexity; that stretch reads ATPAHAPSATASSTATAT. A compositionally biased stretch (basic residues) spans 592-622; the sequence is QHHHQQHHHQQHHHQQQHHQQQHHQQHHHQQ. A compositionally biased stretch (low complexity) spans 623-641; sequence QQHQQQQHQQQQQQQPDQS.

It belongs to the mastermind family.

Its subcellular location is the nucleus. Transactivates the HES3 promoter independently of NOTCH proteins. HES3 is a non-canonical NOTCH target gene which lacks binding sites for RBPJ. Required for testosterone production. The chain is Mastermind-like domain-containing protein 1 (Mamld1) from Mus musculus (Mouse).